Reading from the N-terminus, the 242-residue chain is MAETEALSKLREDFRMQNKSVFILGASGETGRVLLKEILEQGLFSKVTLIGRRKLTFDEEAYKNVNQEVVDFEKLDDYASAFQGHDVGFCCLGTTRVKAGAEGFVRVDRDYVLKSAELAKAGGCKHFNLLSSKGADKSSNFLYLQVKGEVEAKVEELKFDRYSVFRPGVLLCDRQESRPGEWLVRKFFGSLPESWASGYSVPVVTVVRAMLNNMVRPRDKQMELLENKAIHDLGKVHGSLKP.

An N-acetylalanine modification is found at alanine 2. The required for interaction with elongation factor EEF1A1 stretch occupies residues 2–25 (AETEALSKLREDFRMQNKSVFILG). Residues serine 27, glycine 28, glutamate 29, threonine 30, arginine 52, arginine 53, leucine 92, glycine 93, tyrosine 143, lysine 147, leucine 170, and arginine 178 each coordinate NADPH. Tyrosine 143 acts as the Proton acceptor in catalysis. Lysine 147 is a catalytic residue.

As to quaternary structure, monomer. Forms homodimers during oxidative stress. Interacts (via N-terminus) with elongation factor EEF1A1 (via middle-region); the interaction is direct and competes with EEF1A1 binding to guanyl-nucleotide exchange factor EEF1B2, thereby inhibiting GDP for GTP exchange and reactivation of EEF1A1. Interacts with nuclear transport receptors XPO4, IPO5/RANBP5, IPO7, IPO9 and KPNB1 as well as GCN1L1/GCN1 and LRPPRC probably through their HEAT repeats. Binds NCOA5/CIA.

The protein resides in the cytoplasm. Represses translation by preventing reactivation of elongation factor eEF1A. May also inhibit nuclear import by competing with nuclear import substrates for binding to a subset of nuclear transport receptors. Has additionally been proposed to act as a redox sensor involved in cellular oxidative stress surveillance. The sequence is that of Protein HTATIP2 (HTATIP2) from Pongo pygmaeus (Bornean orangutan).